A 583-amino-acid chain; its full sequence is Probable cysteine--tRNA ligase, mitochondrial (583 aa).

Cysteine 82 is a Zn(2+) binding site. An L-cysteine-binding site is contributed by glycine 83. Residues 84–94 (PTVYSSSHIGH) carry the 'HIGH' region motif. An L-cysteine-binding site is contributed by threonine 123. A 'KIIK' region motif is present at residues 128–131 (KIIN). Residues cysteine 271, histidine 296, and glutamate 300 each coordinate Zn(2+). Histidine 296 serves as a coordination point for L-cysteine. Residues 337-341 (KMSKS) carry the 'KMSKS' region motif. Lysine 340 serves as a coordination point for ATP.

This sequence belongs to the class-I aminoacyl-tRNA synthetase family. Zn(2+) is required as a cofactor.

It is found in the mitochondrion. The enzyme catalyses tRNA(Cys) + L-cysteine + ATP = L-cysteinyl-tRNA(Cys) + AMP + diphosphate. Functionally, mitochondrial cysteine-specific aminoacyl-tRNA synthetase that catalyzes the ATP-dependent ligation of cysteine to tRNA(Cys). In terms of biological role, in addition to its role as an aminoacyl-tRNA synthetase, has also cysteine persulfide synthase activity. Produces reactive persulfide species such as cysteine persulfide (CysSSH) from substrate cysteine and mediate direct incorporation of CysSSH into proteins during translations, resulting in protein persulfides and polysulfides. CysSSHs behave as potent antioxidants and cellular protectants. The chain is Probable cysteine--tRNA ligase, mitochondrial (mcysS) from Dictyostelium discoideum (Social amoeba).